The chain runs to 858 residues: RNA-directed RNA polymerase 2a (858 aa).

The region spanning Lys-511–Pro-624 is the RdRp catalytic domain. Residues Thr-772–Val-830 form a disordered region. Residues Asp-779–Arg-790 are compositionally biased toward basic and acidic residues. The segment covering Lys-805–Gln-817 has biased composition (polar residues).

The protein belongs to the ssRNA positive-strand viruses RNA-directed RNA polymerase family. As to quaternary structure, interacts with replication protein 1a.

The catalysed reaction is RNA(n) + a ribonucleoside 5'-triphosphate = RNA(n+1) + diphosphate. RNA-dependent RNA polymerase which replicates the viral genome composed of 3 RNA segments, RNA1, RNA2 and RNA3. The protein is RNA-directed RNA polymerase 2a of Cucumis sativus (Cucumber).